The sequence spans 467 residues: Constitutive acid phosphatase (467 aa).

The signal sequence occupies residues 1-17 (MFKSVVYSVLAAALVNA). Histidine 75 serves as the catalytic Nucleophile. Asparagine 97, asparagine 103, asparagine 162, asparagine 192, asparagine 250, and asparagine 315 each carry an N-linked (GlcNAc...) asparagine glycan. The active-site Proton donor is aspartate 338. 6 N-linked (GlcNAc...) asparagine glycosylation sites follow: asparagine 356, asparagine 390, asparagine 439, asparagine 445, asparagine 456, and asparagine 461.

The protein belongs to the histidine acid phosphatase family.

It carries out the reaction a phosphate monoester + H2O = an alcohol + phosphate. The protein is Constitutive acid phosphatase (PHO3) of Saccharomyces cerevisiae (strain ATCC 204508 / S288c) (Baker's yeast).